The following is a 262-amino-acid chain: Acyl-[acyl-carrier-protein]--UDP-N-acetylglucosamine O-acyltransferase (262 aa).

The protein belongs to the transferase hexapeptide repeat family. LpxA subfamily. As to quaternary structure, homotrimer.

It localises to the cytoplasm. It carries out the reaction a (3R)-hydroxyacyl-[ACP] + UDP-N-acetyl-alpha-D-glucosamine = a UDP-3-O-[(3R)-3-hydroxyacyl]-N-acetyl-alpha-D-glucosamine + holo-[ACP]. It participates in glycolipid biosynthesis; lipid IV(A) biosynthesis; lipid IV(A) from (3R)-3-hydroxytetradecanoyl-[acyl-carrier-protein] and UDP-N-acetyl-alpha-D-glucosamine: step 1/6. Involved in the biosynthesis of lipid A, a phosphorylated glycolipid that anchors the lipopolysaccharide to the outer membrane of the cell. The chain is Acyl-[acyl-carrier-protein]--UDP-N-acetylglucosamine O-acyltransferase from Campylobacter curvus (strain 525.92).